A 556-amino-acid polypeptide reads, in one-letter code: Putative cysteine ligase BshC (556 aa).

Coiled-coil stretches lie at residues 408-442 (ILQK…IAQA) and 468-513 (LGQV…ANLT).

Belongs to the BshC family.

Involved in bacillithiol (BSH) biosynthesis. May catalyze the last step of the pathway, the addition of cysteine to glucosamine malate (GlcN-Mal) to generate BSH. This Symbiobacterium thermophilum (strain DSM 24528 / JCM 14929 / IAM 14863 / T) protein is Putative cysteine ligase BshC.